A 223-amino-acid chain; its full sequence is Keratin-associated protein 5-4 (223 aa).

14 consecutive repeat copies span residues 21-24, 27-30, 79-82, 89-92, 107-110, 117-120, 135-138, 145-148, 155-158, 173-176, 183-186, 193-196, 203-206, and 213-216. Residues 21–216 are 14 X 4 AA repeats of C-C-X-P; sequence CCKPVCCCVP…CCCQSSCCAP (196 aa).

Belongs to the KRTAP type 5 family. As to quaternary structure, interacts with hair keratins. As to expression, expressed during the active phases of the hair cycle in the medulla and the inner root sheath of the forming hair. Also expressed in the upper layers of the epidermis of skin.

In terms of biological role, in the hair cortex, hair keratin intermediate filaments are embedded in an interfilamentous matrix, consisting of hair keratin-associated protein (KRTAP), which are essential for the formation of a rigid and resistant hair shaft through their extensive disulfide bond cross-linking with abundant cysteine residues of hair keratins. The matrix proteins include the high-sulfur and high-glycine-tyrosine keratins. The sequence is that of Keratin-associated protein 5-4 from Mus musculus (Mouse).